The following is a 71-amino-acid chain: Putative membrane protein insertion efficiency factor (71 aa).

The protein belongs to the UPF0161 family.

The protein resides in the cell membrane. Functionally, could be involved in insertion of integral membrane proteins into the membrane. This is Putative membrane protein insertion efficiency factor from Acetivibrio thermocellus (strain ATCC 27405 / DSM 1237 / JCM 9322 / NBRC 103400 / NCIMB 10682 / NRRL B-4536 / VPI 7372) (Clostridium thermocellum).